The primary structure comprises 492 residues: 5-taurinomethyluridine-[tRNA] synthase subunit GTPB3, mitochondrial (492 aa).

The transit peptide at 1-20 (MWRGLWTLAAQAARGPRRLC) directs the protein to the mitochondrion. 5,10-methylenetetrahydrofolate is bound by residues R52, E112, and K152. Residues 249–416 (GVHVVVTGPP…LLEALRKELA (168 aa)) form the TrmE-type G domain. GTP contacts are provided by residues 256 to 263 (GPPNAGKS), 282 to 286 (GTTRD), 303 to 306 (DTAG), 374 to 377 (NKSD), and 397 to 399 (SCL). N259 contacts K(+). Mg(2+) is bound by residues S263 and T284. A 5,10-methylenetetrahydrofolate-binding site is contributed by K492.

This sequence belongs to the TRAFAC class TrmE-Era-EngA-EngB-Septin-like GTPase superfamily. TrmE GTPase family. As to quaternary structure, homodimer; forms a dimer in the presence of potassium. Interacts with MTO1; forms the GTPBP3-MTO1 complex composed of homodimers of GTPBP3 and MTO1. Homodimer, forms homodimer in vivo. The cofactor is K(+). Ubiquitously expressed.

The protein resides in the mitochondrion. It localises to the cytoplasm. It carries out the reaction GTP + H2O = GDP + phosphate + H(+). Its function is as follows. GTPase component of the GTPBP3-MTO1 complex that catalyzes the 5-taurinomethyluridine (taum(5)U) modification at the 34th wobble position (U34) of mitochondrial tRNAs (mt-tRNAs), which plays a role in mt-tRNA decoding and mitochondrial translation. Taum(5)U formation on mammalian mt-tRNA requires the presence of both GTPBP3-mediated GTPase activity and MTO1 catalytic activity. The chain is 5-taurinomethyluridine-[tRNA] synthase subunit GTPB3, mitochondrial from Homo sapiens (Human).